The primary structure comprises 358 residues: Homer protein homolog 3 (358 aa).

The tract at residues 1–80 (MSTAREQPIF…TKTSQKFGQW (80 aa)) is required for interaction with NFATC2. The region spanning 1 to 113 (MSTAREQPIF…EKFQEVKEAA (113 aa)) is the WH1 domain. Residues 95-122 (SEQQLTQFAEKFQEVKEAARLAREKSQD) adopt a coiled-coil conformation. S120 and S158 each carry phosphoserine. Disordered regions lie at residues 137 to 168 (QVPP…TERE) and 239 to 296 (AEPV…QVQD). Positions 190–355 (ALQDSNQRLA…LREGLARLAE (166 aa)) form a coiled coil. The span at 257–267 (LEARVQTKDQE) shows a compositional bias: basic and acidic residues. A compositionally biased stretch (polar residues) spans 268–277 (IQTLKNQSTG). Over residues 280 to 290 (EAPDTAEREET) the composition is skewed to basic and acidic residues.

The protein belongs to the Homer family. In terms of assembly, tetramer. Encodes coiled-coil structures that mediate homo- and heteromultimerization. Interacts with NFATC2; interaction is calcium independent; interaction competes with PPP3CA for NFATC2 binding; interaction is reduced by AKT activation. Interacts with NFATC1 and NFATC4. Interacts with SHANK1; forms a high-order complex at least composed of SHANK1 and HOMER3; the complex formation is regulated by CAMK2A-mediated phosphorylation.

The protein resides in the cytoplasm. It is found in the postsynaptic density. It localises to the synapse. Its function is as follows. Postsynaptic density scaffolding protein. Binds and cross-links cytoplasmic regions of GRM1, GRM5, ITPR1, DNM3, RYR1, RYR2, SHANK1 and SHANK3. By physically linking GRM1 and GRM5 with ER-associated ITPR1 receptors, it aids the coupling of surface receptors to intracellular calcium release. Negatively regulates T cell activation by inhibiting the calcineurin-NFAT pathway. Acts by competing with calcineurin/PPP3CA for NFAT protein binding, hence preventing NFAT activation by PPP3CA. The polypeptide is Homer protein homolog 3 (Rattus norvegicus (Rat)).